The primary structure comprises 439 residues: Hydroxyornithine transacylase SID3 (439 aa).

A PTS1-type peroxisomal targeting signal motif is present at residues 437 to 439 (SKL).

The protein belongs to the lysine N-acyltransferase mbtK family.

It is found in the peroxisome. It participates in siderophore biosynthesis. Hydroxyornithine transacylase; part of the gene cluster that mediates the biosynthesis of hydroxamate-containing siderophores that play a critical role in virulence via intracellular iron acquisition during macrophage infection. The polypeptide is Hydroxyornithine transacylase SID3 (Ajellomyces capsulatus (Darling's disease fungus)).